A 566-amino-acid polypeptide reads, in one-letter code: DBIRD complex subunit ZNF326 (566 aa).

Disordered regions lie at residues 19–81 (HCGV…ESYD) and 145–180 (RPGFMEDRGRESYSSYSSFSSPHMKPAPVGSRGRGT). A compositionally biased stretch (gly residues) spans 59–73 (SHGGGGGGGGGGGNR). Residues 156-165 (SYSSYSSFSS) are compositionally biased toward low complexity. The short motif at 240–263 (KRKMMPQPYNKPGGTFIKKPKMTK) is the Bipartite nuclear localization signal element. A disordered region spans residues 314–347 (FGDSKGEGKSEEEEKRRIEARREKQRRRREKNSE). Residues 317–335 (SKGEGKSEEEEKRRIEARR) are compositionally biased toward basic and acidic residues. 2 consecutive C2H2 AKAP95-type zinc fingers follow at residues 359–381 (CSFCKFRTFEEKEIESHLESAAH) and 452–475 (CSACSVYVPALHSSVQQHLKSPDH). The segment at 516-566 (PFEINDQAQEQQTEEEDKAEEPAEGEEEEEEEEEEETEEQTDFTLDHTEDN) is disordered. Acidic residues predominate over residues 527-556 (QTEEEDKAEEPAEGEEEEEEEEEEETEEQT).

It belongs to the AKAP95 family. As to quaternary structure, component of the DBIRD complex.

The protein resides in the nucleus. Its function is as follows. Core component of the DBIRD complex, a multiprotein complex that acts at the interface between core mRNP particles and RNA polymerase II (RNAPII) and integrates transcript elongation with the regulation of alternative splicing. This is DBIRD complex subunit ZNF326 (ZNF326) from Gallus gallus (Chicken).